A 61-amino-acid chain; its full sequence is Large ribosomal subunit protein uL30 (61 aa).

Belongs to the universal ribosomal protein uL30 family. In terms of assembly, part of the 50S ribosomal subunit.

This chain is Large ribosomal subunit protein uL30, found in Rubrobacter xylanophilus (strain DSM 9941 / JCM 11954 / NBRC 16129 / PRD-1).